Consider the following 274-residue polypeptide: Diaminopimelate epimerase (274 aa).

3 residues coordinate substrate: Asn11, Gln44, and Asn64. The active-site Proton donor is the Cys73. Residues Gly74 to Asn75, Asn157, Asn190, and Glu208 to Arg209 contribute to the substrate site. Cys217 serves as the catalytic Proton acceptor. Gly218 to Ser219 lines the substrate pocket.

It belongs to the diaminopimelate epimerase family. In terms of assembly, homodimer.

Its subcellular location is the cytoplasm. It catalyses the reaction (2S,6S)-2,6-diaminopimelate = meso-2,6-diaminopimelate. It functions in the pathway amino-acid biosynthesis; L-lysine biosynthesis via DAP pathway; DL-2,6-diaminopimelate from LL-2,6-diaminopimelate: step 1/1. In terms of biological role, catalyzes the stereoinversion of LL-2,6-diaminopimelate (L,L-DAP) to meso-diaminopimelate (meso-DAP), a precursor of L-lysine and an essential component of the bacterial peptidoglycan. The protein is Diaminopimelate epimerase of Mannheimia succiniciproducens (strain KCTC 0769BP / MBEL55E).